A 247-amino-acid polypeptide reads, in one-letter code: Ribonuclease PH (247 aa).

Residues arginine 87 and 125–127 each bind phosphate; that span reads GTR.

Belongs to the RNase PH family. Homohexameric ring arranged as a trimer of dimers.

The enzyme catalyses tRNA(n+1) + phosphate = tRNA(n) + a ribonucleoside 5'-diphosphate. Phosphorolytic 3'-5' exoribonuclease that plays an important role in tRNA 3'-end maturation. Removes nucleotide residues following the 3'-CCA terminus of tRNAs; can also add nucleotides to the ends of RNA molecules by using nucleoside diphosphates as substrates, but this may not be physiologically important. Probably plays a role in initiation of 16S rRNA degradation (leading to ribosome degradation) during starvation. This chain is Ribonuclease PH, found in Frankia casuarinae (strain DSM 45818 / CECT 9043 / HFP020203 / CcI3).